Here is a 511-residue protein sequence, read N- to C-terminus: Alpha-amylase 1A (511 aa).

Positions 1 to 15 (MKLFWLLFTIGFCWA) are cleaved as a signal peptide. At Gln-16 the chain carries Pyrrolidone carboxylic acid. 3 cysteine pairs are disulfide-bonded: Cys-43–Cys-101, Cys-85–Cys-130, and Cys-156–Cys-175. Asn-115, Arg-173, and Asp-182 together coordinate Ca(2+). A chloride-binding site is contributed by Arg-210. Asp-212 acts as the Nucleophile in catalysis. Position 216 (His-216) interacts with Ca(2+). Catalysis depends on Glu-248, which acts as the Proton donor. 2 residues coordinate chloride: Asn-313 and Arg-352. Asn-365 carries the deamidated asparagine; partial modification. A disulfide bond links Cys-393 and Cys-399. Asn-427 is modified (deamidated asparagine; partial; alternate). Asn-427 is a glycosylation site (N-linked (GlcNAc...) asparagine). Cys-465 and Cys-477 are disulfide-bonded. Asn-474 bears the Deamidated asparagine; partial mark. A glycan (N-linked (GlcNAc...) asparagine) is linked at Asn-476.

This sequence belongs to the glycosyl hydrolase 13 family. As to quaternary structure, monomer. It depends on Ca(2+) as a cofactor. Chloride serves as cofactor.

The protein localises to the secreted. The enzyme catalyses Endohydrolysis of (1-&gt;4)-alpha-D-glucosidic linkages in polysaccharides containing three or more (1-&gt;4)-alpha-linked D-glucose units.. Its function is as follows. Calcium-binding enzyme that initiates starch digestion in the oral cavity. Catalyzes the hydrolysis of internal (1-&gt;4)-alpha-D-glucosidic bonds, yielding a mixture of maltose, isomaltose, small amounts of glucose as well as small linear and branched oligosaccharides called dextrins. This chain is Alpha-amylase 1A, found in Homo sapiens (Human).